A 219-amino-acid polypeptide reads, in one-letter code: Thiamine-phosphate synthase (219 aa).

Residues 44 to 48 and Asn79 each bind 4-amino-2-methyl-5-(diphosphooxymethyl)pyrimidine; that span reads QFREK. Positions 80 and 99 each coordinate Mg(2+). Ser117 provides a ligand contact to 4-amino-2-methyl-5-(diphosphooxymethyl)pyrimidine. Residue 143–145 coordinates 2-[(2R,5Z)-2-carboxy-4-methylthiazol-5(2H)-ylidene]ethyl phosphate; it reads TST. Position 146 (Lys146) interacts with 4-amino-2-methyl-5-(diphosphooxymethyl)pyrimidine. 2-[(2R,5Z)-2-carboxy-4-methylthiazol-5(2H)-ylidene]ethyl phosphate contacts are provided by residues Gly175 and 195-196; that span reads IS.

It belongs to the thiamine-phosphate synthase family. Mg(2+) is required as a cofactor.

It carries out the reaction 2-[(2R,5Z)-2-carboxy-4-methylthiazol-5(2H)-ylidene]ethyl phosphate + 4-amino-2-methyl-5-(diphosphooxymethyl)pyrimidine + 2 H(+) = thiamine phosphate + CO2 + diphosphate. The enzyme catalyses 2-(2-carboxy-4-methylthiazol-5-yl)ethyl phosphate + 4-amino-2-methyl-5-(diphosphooxymethyl)pyrimidine + 2 H(+) = thiamine phosphate + CO2 + diphosphate. It catalyses the reaction 4-methyl-5-(2-phosphooxyethyl)-thiazole + 4-amino-2-methyl-5-(diphosphooxymethyl)pyrimidine + H(+) = thiamine phosphate + diphosphate. It participates in cofactor biosynthesis; thiamine diphosphate biosynthesis; thiamine phosphate from 4-amino-2-methyl-5-diphosphomethylpyrimidine and 4-methyl-5-(2-phosphoethyl)-thiazole: step 1/1. Its function is as follows. Condenses 4-methyl-5-(beta-hydroxyethyl)thiazole monophosphate (THZ-P) and 2-methyl-4-amino-5-hydroxymethyl pyrimidine pyrophosphate (HMP-PP) to form thiamine monophosphate (TMP). The protein is Thiamine-phosphate synthase of Bacillus thuringiensis subsp. konkukian (strain 97-27).